Reading from the N-terminus, the 309-residue chain is T-lymphocyte activation antigen CD86 (309 aa).

Positions 1–23 are cleaved as a signal peptide; sequence MDPRCTMGLAILIFVTVLLISDA. The Extracellular portion of the chain corresponds to 24–244; the sequence is VSVETQAYFN…EFPSPQTYWK (221 aa). Asn33, Asn47, Asn92, Asn135, Asn146, Asn154, Asn175, Asn190, and Asn231 each carry an N-linked (GlcNAc...) asparagine glycan. The Ig-like V-type domain maps to 33 to 128; the sequence is NGTAYLPCPF…GSIILQQTLT (96 aa). Cys40 and Cys110 are oxidised to a cystine. One can recognise an Ig-like C2-type domain in the interval 150–223; that stretch reads NSGINLTCTS…VVCVLETESM (74 aa). Cys157 and Cys216 form a disulfide bridge. Residues 245-265 form a helical membrane-spanning segment; the sequence is EITASVTVALLLVMLLIIVCH. Topologically, residues 266–309 are cytoplasmic; that stretch reads KKPNQPSRPSNTASKLERDSNADRETINLKELEPQIASAKPNAE. The segment covering 269–279 has biased composition (polar residues); sequence NQPSRPSNTAS. The segment at 269–309 is disordered; sequence NQPSRPSNTASKLERDSNADRETINLKELEPQIASAKPNAE. A compositionally biased stretch (basic and acidic residues) spans 280–298; sequence KLERDSNADRETINLKELE.

As to quaternary structure, homodimer. Interacts with MARCH8. Interacts (via cytoplasmic domain) with PHB1 and PHB2; the interactions increases after priming with CD40. Interacts with CD28. In terms of processing, polyubiquitinated; which is promoted by MARCH8 and results in endocytosis and lysosomal degradation. Expressed on activated B-cells.

The protein resides in the cell membrane. Its function is as follows. Receptor involved in the costimulatory signal essential for T-lymphocyte proliferation and interleukin-2 production, by binding CD28 or CTLA-4. May play a critical role in the early events of T-cell activation and costimulation of naive T-cells, such as deciding between immunity and anergy that is made by T-cells within 24 hours after activation. Also involved in the regulation of B cells function, plays a role in regulating the level of IgG(1) produced. Upon CD40 engagement, activates NF-kappa-B signaling pathway via phospholipase C and protein kinase C activation. The protein is T-lymphocyte activation antigen CD86 (Cd86) of Mus musculus (Mouse).